The sequence spans 34 residues: uncharacterized protein (34 aa).

The tract at residues 1 to 34 (MRLRRLFKQPSTRVLGVTNCPRQQGHQKRREQPD) is disordered. Residues 25-34 (GHQKRREQPD) show a composition bias toward basic residues.

This is an uncharacterized protein from Schizosaccharomyces pombe (strain 972 / ATCC 24843) (Fission yeast).